A 390-amino-acid polypeptide reads, in one-letter code: Chorismate synthase (390 aa).

2 residues coordinate NADP(+): Arg-39 and Arg-45. FMN contacts are provided by residues 132-134 (RSS), 253-254 (NA), Gly-298, 313-317 (KPIPT), and Arg-339.

This sequence belongs to the chorismate synthase family. Homotetramer. FMNH2 serves as cofactor.

The enzyme catalyses 5-O-(1-carboxyvinyl)-3-phosphoshikimate = chorismate + phosphate. It functions in the pathway metabolic intermediate biosynthesis; chorismate biosynthesis; chorismate from D-erythrose 4-phosphate and phosphoenolpyruvate: step 7/7. Its function is as follows. Catalyzes the anti-1,4-elimination of the C-3 phosphate and the C-6 proR hydrogen from 5-enolpyruvylshikimate-3-phosphate (EPSP) to yield chorismate, which is the branch point compound that serves as the starting substrate for the three terminal pathways of aromatic amino acid biosynthesis. This reaction introduces a second double bond into the aromatic ring system. The sequence is that of Chorismate synthase from Bacillus cytotoxicus (strain DSM 22905 / CIP 110041 / 391-98 / NVH 391-98).